The chain runs to 357 residues: Aurora kinase A- and ninein-interacting protein (357 aa).

The segment covering 72-93 (TSQQGKTNGADQRSVSSHTESQ) has biased composition (polar residues). The tract at residues 72–102 (TSQQGKTNGADQRSVSSHTESQTNKESKEDA) is disordered. Residues 189–357 (QKEGEDSSCE…EGNQVIRHQA (169 aa)) are interaction with AURKA. The interaction with RBBP8/CtIP stretch occupies residues 281 to 357 (KDSWSQLFTE…EGNQVIRHQA (77 aa)). Residue Ser-292 is modified to Phosphoserine.

This sequence belongs to the AUNIP family. Interacts (via C-terminus) with AURKA (via C-terminus). Interacts (via N-terminus) with NIN; this interaction blocks NIN phosphorylation by both AURKA and GSK3B. Identified in a complex with NIN and AURKA. Interacts with RBBP8/CtIP.

Its subcellular location is the nucleus. The protein resides in the chromosome. It is found in the cytoplasm. The protein localises to the cytoskeleton. It localises to the microtubule organizing center. Its subcellular location is the centrosome. The protein resides in the spindle pole. In terms of biological role, DNA-binding protein that accumulates at DNA double-strand breaks (DSBs) following DNA damage and promotes DNA resection and homologous recombination. Serves as a sensor of DNA damage: binds DNA with a strong preference for DNA substrates that mimic structures generated at stalled replication forks, and anchors RBBP8/CtIP to DSB sites to promote DNA end resection and ensuing homologous recombination repair. Inhibits non-homologous end joining (NHEJ). Required for the dynamic movement of AURKA at the centrosomes and spindle apparatus during the cell cycle. The chain is Aurora kinase A- and ninein-interacting protein from Bos taurus (Bovine).